The sequence spans 642 residues: Sec1 family domain-containing protein 1 (642 aa).

The residue at position 2 (Ala-2) is an N-acetylalanine. Phosphoserine occurs at positions 37, 303, and 528.

This sequence belongs to the STXBP/unc-18/SEC1 family. In terms of assembly, interacts with STX17. Interacts with STX5A. Interacts with the COG complex via COG4.

The protein localises to the cytoplasm. It localises to the endoplasmic reticulum membrane. Its subcellular location is the golgi apparatus. The protein resides in the golgi stack membrane. Its function is as follows. Plays a role in SNARE-pin assembly and Golgi-to-ER retrograde transport via its interaction with COG4. Involved in vesicular transport between the endoplasmic reticulum and the Golgi. The polypeptide is Sec1 family domain-containing protein 1 (SCFD1) (Homo sapiens (Human)).